The primary structure comprises 222 residues: N-(5'-phosphoribosyl)anthranilate isomerase (222 aa).

Belongs to the TrpF family.

The catalysed reaction is N-(5-phospho-beta-D-ribosyl)anthranilate = 1-(2-carboxyphenylamino)-1-deoxy-D-ribulose 5-phosphate. The protein operates within amino-acid biosynthesis; L-tryptophan biosynthesis; L-tryptophan from chorismate: step 3/5. The sequence is that of N-(5'-phosphoribosyl)anthranilate isomerase from Beijerinckia indica subsp. indica (strain ATCC 9039 / DSM 1715 / NCIMB 8712).